We begin with the raw amino-acid sequence, 221 residues long: Endo-1,4-beta-xylanase 2 (221 aa).

Residues 1-19 (MVAFTSLLAGFAAIAGVLS) form the signal peptide. The GH11 domain maps to 32-221 (QTIGPGTGYS…SSGSASITVS (190 aa)). Residues Asn69 and Asn92 are each glycosylated (N-linked (GlcNAc...) asparagine). The Nucleophile role is filled by Glu117. The active-site Proton donor is Glu208.

Belongs to the glycosyl hydrolase 11 (cellulase G) family.

It localises to the secreted. It carries out the reaction Endohydrolysis of (1-&gt;4)-beta-D-xylosidic linkages in xylans.. It functions in the pathway glycan degradation; xylan degradation. Functionally, endo-1,4-beta-xylanase involved in the hydrolysis of xylan, a major structural heterogeneous polysaccharide found in plant biomass representing the second most abundant polysaccharide in the biosphere, after cellulose. In Trichoderma harzianum (Hypocrea lixii), this protein is Endo-1,4-beta-xylanase 2 (Xyn2).